We begin with the raw amino-acid sequence, 383 residues long: F-box/kelch-repeat protein At4g19330 (383 aa).

Residues 1–27 (MAYLSFKSNMERTPRESNTPCPPPQPS) are disordered. One can recognise an F-box domain in the interval 28–79 (PSLFSSLPDDIVLNILARISTSYYQTLSLVSKTFRLLILSKELDMERSYLGT). Kelch repeat units lie at residues 147–192 (ETYE…VLDG), 193–239 (KLYV…NIQT), and 272–318 (STCE…SEIG).

Functionally, involved in seed germination. This chain is F-box/kelch-repeat protein At4g19330, found in Arabidopsis thaliana (Mouse-ear cress).